A 208-amino-acid polypeptide reads, in one-letter code: Large ribosomal subunit protein bL25 (208 aa).

The segment at 188–208 (AVETETEEETTTGESPAQPAE) is disordered.

It belongs to the bacterial ribosomal protein bL25 family. CTC subfamily. Part of the 50S ribosomal subunit; part of the 5S rRNA/L5/L18/L25 subcomplex. Contacts the 5S rRNA. Binds to the 5S rRNA independently of L5 and L18.

Functionally, this is one of the proteins that binds to the 5S RNA in the ribosome where it forms part of the central protuberance. The chain is Large ribosomal subunit protein bL25 from Moorella thermoacetica (strain ATCC 39073 / JCM 9320).